A 191-amino-acid chain; its full sequence is Corticoliberin (191 aa).

A signal peptide spans 1 to 24; it reads MRLPLLVSAGVLLVALLPCPPCRA. A propeptide spanning residues 25–148 is cleaved from the precursor; sequence LLSRGPVLGA…RQEAPERERR (124 aa). The disordered stretch occupies residues 115–153; that stretch reads PLPRRPLDSPSGPAERGAENALSSRQEAPERERRSEEPP. A compositionally biased stretch (basic and acidic residues) spans 141-151; it reads EAPERERRSEE. Isoleucine 189 is modified (isoleucine amide).

It belongs to the sauvagine/corticotropin-releasing factor/urotensin I family. Interacts (via C-terminus) with CRFR1 (via N-terminal extracellular domain). In terms of tissue distribution, produced by the hypothalamus.

The protein resides in the secreted. Functionally, hormone regulating the release of corticotropin from pituitary gland. Induces NLRP6 in intestinal epithelial cells, hence may influence gut microbiota profile. This chain is Corticoliberin (CRH), found in Sus scrofa (Pig).